The following is a 386-amino-acid chain: MSALEKSMHLGRLPSRPPLPGSGGSQSGAKMRMGPGRKRDFSPVPWSQYFESMEDVEVENETGKDTFRVYKSGSEGPVLLLLHGGGHSALSWAVFTAAIISRVQCRIVALDLRSHGETKVKNPEDLSAETMAKDVGNVVEAMYGDLPPPIMLIGHSMGGAIAVHTASSNLVPSLLGLCMIDVVEGTAMDALNSMQNFLRGRPKTFKSLENAIEWSVKSGQIRNLESARVSMVGQVKQCEGITSPEGSKSIVEGIIEEEEEDEEGSESISKRKKEDDMETKKDHPYTWRIELAKTEKYWDGWFRGLSNLFLSCPIPKLLLLAGVDRLDKDLTIGQMQGKFQMQVLPQCGHAVHEDAPDKVAEAVATFLIRHRFAEPIGGFQCVFPGC.

The tract at residues 1-38 (MSALEKSMHLGRLPSRPPLPGSGGSQSGAKMRMGPGRK) is disordered. Serine 15 is modified (phosphoserine). The residue at position 16 (arginine 16) is an Asymmetric dimethylarginine; alternate. An Omega-N-methylarginine; alternate modification is found at arginine 16. Serine 42 is subject to Phosphoserine. Residues serine 156 and aspartate 181 contribute to the active site. Residues 254–265 (IIEEEEEDEEGS) are compositionally biased toward acidic residues. Residues 254 to 280 (IIEEEEEDEEGSESISKRKKEDDMETK) are disordered. The span at 268–280 (ISKRKKEDDMETK) shows a compositional bias: basic and acidic residues. The active site involves histidine 349.

The protein belongs to the AB hydrolase superfamily. Binds PPP2CA and PPP2CB. Post-translationally, phosphorylated by SIK1 following increases in intracellular sodium, leading to dissociation from the protein phosphatase 2A (PP2A) complex and subsequent dephosphorylation of sodium/potassium-transporting ATPase ATP1A1.

The catalysed reaction is [phosphatase 2A protein]-C-terminal L-leucine methyl ester + H2O = [phosphatase 2A protein]-C-terminal L-leucine + methanol + H(+). In terms of biological role, demethylates proteins that have been reversibly carboxymethylated. Demethylates PPP2CB (in vitro) and PPP2CA. Binding to PPP2CA displaces the manganese ion and inactivates the enzyme. In Homo sapiens (Human), this protein is Protein phosphatase methylesterase 1 (PPME1).